The chain runs to 188 residues: MTKLIYLIGPSGAGKDSLLRAIRQLPLPRLLVAHRYITRPAEIQGENHIALTPEEFAIRQQLGIFALDWQAHQCHYGIGIEIDYWLQRGSYVIVNGSRAYLTQARERYGNTLFPICLTVSESALRQRLRARGRESEQQIATRLQRAEDEQSRLQSDCILLNNDGDLQRTLSTFQSLLPFDRACAAHRE.

9-16 provides a ligand contact to ATP; that stretch reads GPSGAGKD.

This sequence belongs to the ribose 1,5-bisphosphokinase family.

The enzyme catalyses alpha-D-ribose 1,5-bisphosphate + ATP = 5-phospho-alpha-D-ribose 1-diphosphate + ADP. The protein operates within metabolic intermediate biosynthesis; 5-phospho-alpha-D-ribose 1-diphosphate biosynthesis; 5-phospho-alpha-D-ribose 1-diphosphate from D-ribose 5-phosphate (route II): step 3/3. Catalyzes the phosphorylation of ribose 1,5-bisphosphate to 5-phospho-D-ribosyl alpha-1-diphosphate (PRPP). The chain is Ribose 1,5-bisphosphate phosphokinase PhnN from Pectobacterium atrosepticum (strain SCRI 1043 / ATCC BAA-672) (Erwinia carotovora subsp. atroseptica).